The sequence spans 448 residues: Homogentisate 1,2-dioxygenase (448 aa).

His-303 functions as the Proton acceptor in the catalytic mechanism. Fe cation contacts are provided by His-346 and Glu-352. Homogentisate is bound by residues Tyr-361 and His-382. His-382 provides a ligand contact to Fe cation.

It belongs to the homogentisate dioxygenase family. In terms of assembly, hexamer; dimer of trimers. It depends on Fe cation as a cofactor.

It carries out the reaction homogentisate + O2 = 4-maleylacetoacetate + H(+). It participates in amino-acid degradation; L-phenylalanine degradation; acetoacetate and fumarate from L-phenylalanine: step 4/6. In terms of biological role, involved in the catabolism of homogentisate (2,5-dihydroxyphenylacetate or 2,5-OH-PhAc), a central intermediate in the degradation of phenylalanine and tyrosine. Catalyzes the oxidative ring cleavage of the aromatic ring of homogentisate to yield maleylacetoacetate. The polypeptide is Homogentisate 1,2-dioxygenase (Rhodopseudomonas palustris (strain TIE-1)).